The sequence spans 241 residues: Isoprenyl transferase (241 aa).

The active site involves D17. Mg(2+) is bound at residue D17. Substrate-binding positions include G18–R21, W22, R30, H34, and S62–E64. Residue N65 is the Proton acceptor of the active site. Substrate is bound by residues W66, R68, R186, and R192–S194. E205 provides a ligand contact to Mg(2+).

This sequence belongs to the UPP synthase family. In terms of assembly, homodimer. The cofactor is Mg(2+).

Its function is as follows. Catalyzes the condensation of isopentenyl diphosphate (IPP) with allylic pyrophosphates generating different type of terpenoids. This is Isoprenyl transferase from Leptospira interrogans serogroup Icterohaemorrhagiae serovar copenhageni (strain Fiocruz L1-130).